Reading from the N-terminus, the 455-residue chain is EP1-like glycoprotein 1 (455 aa).

The N-terminal stretch at 1–22 (MLRFDYLLITALAISTVSVVMA) is a signal peptide. Residues 43-163 (TEYDASYRFL…HGKFVWQSFD (121 aa)) enclose the Bulb-type lectin domain. 5 N-linked (GlcNAc...) asparagine glycosylation sites follow: asparagine 106, asparagine 191, asparagine 211, asparagine 241, and asparagine 289. The residue at position 374 (cysteine 374) is an S-nitrosocysteine. The PAN domain occupies 374-455 (CSGGKGKAVN…NTSSVAYIKY (82 aa)). 2 disulfides stabilise this stretch: cysteine 410-cysteine 432 and cysteine 414-cysteine 420. Residue asparagine 446 is glycosylated (N-linked (GlcNAc...) asparagine).

It is found in the secreted. Its subcellular location is the cell wall. The chain is EP1-like glycoprotein 1 from Arabidopsis thaliana (Mouse-ear cress).